The chain runs to 503 residues: Zinc finger protein JACKDAW (503 aa).

Low complexity predominate over residues 32–51 (IPDLNPNSNPNPNAKPNSSS). The disordered stretch occupies residues 32–68 (IPDLNPNSNPNPNAKPNSSSAKKKRNQPGTPDPDADV). Ser72 is subject to Phosphoserine. 2 consecutive C2H2-type zinc fingers follow at residues 82-104 (FVCE…RRGH) and 124-154 (YICP…SRKH). 2 short sequence motifs (nuclear localization signal) span residues 100-107 (HRRGHNLP) and 146-153 (IKKHYSRK). A C2H2-type 2; degenerate zinc finger spans residues 159-182 (WKCEKCSKKYAVQSDWKAHAKTCG). The Zn(2+) site is built by Cys161, Cys164, His177, Cys181, Cys188, Cys190, His203, and Cys207. Residues 186 to 209 (YKCDCGTLFSRKDSFITHRAFCDA) form a CCHC-type 2; atypical zinc finger. The interval 196-208 (RKDSFITHRAFCD) is SHR-binding. 2 disordered regions span residues 301-417 (SSSS…SSPM) and 432-465 (RENH…LNPA). Residues 319 to 358 (TSTNPSLTLSSSSTSQQTSASLQHQTLKDSSFSPLFSSSS) are compositionally biased toward low complexity. Residues 381-392 (MGSTRSNSSTAP) show a composition bias toward polar residues. A compositionally biased stretch (low complexity) spans 396-407 (AGPTMTSSSATA). The span at 444-465 (GVSTSSVDNNPFQSNRSGLNPA) shows a compositional bias: polar residues.

In terms of assembly, interacts with SHR, SCR, MGP and itself. The heterodimer with SHR involves its zinc fingers. Interacts with SIEL. Binds to RGA and SCL3 competitively in the nucleus. Expressed in the quiescent center, the ground tissue stem cells and to a lesser extent in mature cortex and endodermis cells.

It is found in the nucleus. Its function is as follows. Transcription factor that, together with BIB, regulates tissue boundaries and asymmetric cell division by a rapid up-regulation of 'SCARECROW' (SCR), thus controlling the nuclear localization of 'SHORT-ROOT' (SHR) and restricting its action. Binds DNA via its zinc fingers. Recognizes and binds to SCL3 promoter sequence 5'-AGACAA-3' to promote its expression when in complex with RGA. Confines CYCD6 expression to the cortex-endodermis initial/daughter (CEI/CEID) tissues. Required for radial patterning and stem cell maintenance. Counteracted by 'MAGPIE' (MGP). Binds to the SCR and MGP promoter sequences. Controls position-dependent signals that regulate epidermal-cell-type patterning. This chain is Zinc finger protein JACKDAW, found in Arabidopsis thaliana (Mouse-ear cress).